A 688-amino-acid chain; its full sequence is Glycine--tRNA ligase beta subunit (688 aa).

The protein belongs to the class-II aminoacyl-tRNA synthetase family. Tetramer of two alpha and two beta subunits.

Its subcellular location is the cytoplasm. The enzyme catalyses tRNA(Gly) + glycine + ATP = glycyl-tRNA(Gly) + AMP + diphosphate. The chain is Glycine--tRNA ligase beta subunit from Geotalea uraniireducens (strain Rf4) (Geobacter uraniireducens).